The chain runs to 734 residues: Photosystem I P700 chlorophyll a apoprotein A2 (734 aa).

8 consecutive transmembrane segments (helical) span residues isoleucine 46–alanine 69, leucine 135–glutamine 158, leucine 175–isoleucine 199, isoleucine 273–tyrosine 291, isoleucine 330–tyrosine 353, alanine 369–isoleucine 395, alanine 417–histidine 439, and phenylalanine 517–valine 535. [4Fe-4S] cluster is bound by residues cysteine 559 and cysteine 568. 2 helical membrane passes run alanine 575–tryptophan 596 and leucine 643–isoleucine 665. Chlorophyll a contacts are provided by histidine 654, methionine 662, and tyrosine 670. Tryptophan 671 is a binding site for phylloquinone. A helical transmembrane segment spans residues leucine 707–alanine 727.

It belongs to the PsaA/PsaB family. As to quaternary structure, the PsaA/B heterodimer binds the P700 chlorophyll special pair and subsequent electron acceptors. PSI consists of a core antenna complex that captures photons, and an electron transfer chain that converts photonic excitation into a charge separation. The eukaryotic PSI reaction center is composed of at least 11 subunits. It depends on P700 is a chlorophyll a/chlorophyll a' dimer, A0 is one or more chlorophyll a, A1 is one or both phylloquinones and FX is a shared 4Fe-4S iron-sulfur center. as a cofactor.

The protein localises to the plastid. Its subcellular location is the chloroplast thylakoid membrane. It catalyses the reaction reduced [plastocyanin] + hnu + oxidized [2Fe-2S]-[ferredoxin] = oxidized [plastocyanin] + reduced [2Fe-2S]-[ferredoxin]. Its function is as follows. PsaA and PsaB bind P700, the primary electron donor of photosystem I (PSI), as well as the electron acceptors A0, A1 and FX. PSI is a plastocyanin-ferredoxin oxidoreductase, converting photonic excitation into a charge separation, which transfers an electron from the donor P700 chlorophyll pair to the spectroscopically characterized acceptors A0, A1, FX, FA and FB in turn. Oxidized P700 is reduced on the lumenal side of the thylakoid membrane by plastocyanin. The sequence is that of Photosystem I P700 chlorophyll a apoprotein A2 from Saccharum hybrid (Sugarcane).